The sequence spans 295 residues: Protease HtpX (295 aa).

A run of 2 helical transmembrane segments spans residues 4-24 (IFLF…VLRL) and 42-62 (ALLI…LAIS). His147 serves as a coordination point for Zn(2+). Glu148 is an active-site residue. His151 serves as a coordination point for Zn(2+). A run of 2 helical transmembrane segments spans residues 155–175 (GDMV…IFLA) and 197–217 (FWIT…IIVM). Glu224 is a Zn(2+) binding site.

This sequence belongs to the peptidase M48B family. Zn(2+) is required as a cofactor.

Its subcellular location is the cell inner membrane. The sequence is that of Protease HtpX from Thioalkalivibrio sulfidiphilus (strain HL-EbGR7).